A 359-amino-acid chain; its full sequence is Pyruvate dehydrogenase E1 component subunit beta, mitochondrial (359 aa).

The N-terminal 30 residues, methionine 1–alanine 30, are a transit peptide targeting the mitochondrion. Tyrosine 67 bears the Phosphotyrosine mark. Glutamate 89 serves as a coordination point for thiamine diphosphate. Residues isoleucine 142, alanine 190, isoleucine 191, aspartate 193, and asparagine 195 each contribute to the K(+) site. Lysine 354 carries the N6-acetyllysine modification.

As to quaternary structure, heterotetramer of two PDHA1 and two PDHB subunits. The heterotetramer interacts with DLAT, and is part of the multimeric pyruvate dehydrogenase complex that contains multiple copies of pyruvate dehydrogenase (E1), dihydrolipoamide acetyltransferase (DLAT, E2) and lipoamide dehydrogenase (DLD, E3). These subunits are bound to an inner core composed of about 48 DLAT and 12 PDHX molecules. Interacts with DLAT. Thiamine diphosphate is required as a cofactor.

It localises to the mitochondrion matrix. The catalysed reaction is N(6)-[(R)-lipoyl]-L-lysyl-[protein] + pyruvate + H(+) = N(6)-[(R)-S(8)-acetyldihydrolipoyl]-L-lysyl-[protein] + CO2. Its function is as follows. The pyruvate dehydrogenase complex catalyzes the overall conversion of pyruvate to acetyl-CoA and CO(2), and thereby links the glycolytic pathway to the tricarboxylic cycle. The sequence is that of Pyruvate dehydrogenase E1 component subunit beta, mitochondrial (PDHB) from Bos taurus (Bovine).